The chain runs to 880 residues: Chaperone protein ClpB 1 (880 aa).

The Clp R domain maps to 6–148 (PNKFTDKAWE…EASIKAVRGS (143 aa)). Repeat regions lie at residues 9–74 (FTDK…TQRQ) and 85–148 (LGRS…VRGS). The NBD1 stretch occupies residues 161–343 (EALQKFGRDL…RRFQQVYVDQ (183 aa)). 208–215 (GEPGVGKT) lines the ATP pocket. Positions 344-554 (PSVENTISIL…IAEIVAKWTG (211 aa)) are linker. Residues 394-530 (IDLVDEAAAQ…KEAKLLELQS (137 aa)) are a coiled coil. The segment at 564–775 (ERQKLLQLES…RVDDTILFHA (212 aa)) is NBD2. An ATP-binding site is contributed by 614-621 (GPTGVGKT). A C-terminal region spans residues 776-880 (LSRSEMSHII…VKVSVTQITT (105 aa)).

It belongs to the ClpA/ClpB family. In terms of assembly, homohexamer. The oligomerization is ATP-dependent.

Its subcellular location is the cytoplasm. Functionally, part of a stress-induced multi-chaperone system, it is involved in the recovery of the cell from heat-induced damage, in cooperation with DnaK, DnaJ and GrpE. Acts before DnaK, in the processing of protein aggregates. Protein binding stimulates the ATPase activity; ATP hydrolysis unfolds the denatured protein aggregates, which probably helps expose new hydrophobic binding sites on the surface of ClpB-bound aggregates, contributing to the solubilization and refolding of denatured protein aggregates by DnaK. This chain is Chaperone protein ClpB 1 (clpB1), found in Nostoc sp. (strain PCC 7120 / SAG 25.82 / UTEX 2576).